The following is a 224-amino-acid chain: Ribosome maturation factor RimP (224 aa).

Residues 194-224 (REGRIPGDDLGSEEAGEQSDETASGEAEDKE) form a disordered region. Residues 203 to 213 (LGSEEAGEQSD) show a composition bias toward acidic residues.

The protein belongs to the RimP family.

The protein resides in the cytoplasm. Required for maturation of 30S ribosomal subunits. In Brucella anthropi (strain ATCC 49188 / DSM 6882 / CCUG 24695 / JCM 21032 / LMG 3331 / NBRC 15819 / NCTC 12168 / Alc 37) (Ochrobactrum anthropi), this protein is Ribosome maturation factor RimP.